Consider the following 260-residue polypeptide: Transcription factor SUM-1 (260 aa).

The 52-residue stretch at 112 to 163 (DKRKAATLRERRRLRKVNEAFEALKRHTCANPNQRLPKVEILRNAIEYIEKL) folds into the bHLH domain. Residues 171–208 (KANGDSEMDSAETSSNTSDAMTDGSSPGSYSSDKAQQY) form a disordered region. Residues 181–205 (AETSSNTSDAMTDGSSPGSYSSDKA) are compositionally biased toward polar residues.

Efficient DNA binding requires dimerization with another bHLH protein. Homodimer, and heterodimer with the ubiquitous bHLH protein E12.

It localises to the nucleus. Regulatory factor during embryogenesis. Conversion of pluripotent secondary mesenchyme cells to myogenic cells. It binds to the MCK enhancer element. The protein is Transcription factor SUM-1 (SUM-1) of Lytechinus variegatus (Green sea urchin).